The chain runs to 252 residues: Small ribosomal subunit protein uS3 (252 aa).

The 73-residue stretch at 39–111 folds into the KH type-2 domain; the sequence is IRKLINNFAK…EVNLNVLEVK (73 aa). Residues 222–252 form a disordered region; that stretch reads KPFASQSSNTPNRRPRNFKGGNNNHVNAKKN. The span at 241–252 shows a compositional bias: polar residues; that stretch reads GGNNNHVNAKKN.

It belongs to the universal ribosomal protein uS3 family. As to quaternary structure, part of the 30S ribosomal subunit. Forms a tight complex with proteins S10 and S14.

In terms of biological role, binds the lower part of the 30S subunit head. Binds mRNA in the 70S ribosome, positioning it for translation. This chain is Small ribosomal subunit protein uS3, found in Phytoplasma sp. (strain STRAWB2).